The sequence spans 516 residues: L-amino-acid oxidase (516 aa).

Positions 1 to 18 (MNVFFMFSLLFLAALGSC) are cleaved as a signal peptide. Cys28 and Cys189 are disulfide-bonded. FAD contacts are provided by residues 61–62 (MA), 81–82 (EA), Arg89, and 103–106 (GPMR). Positions 106 and 239 each coordinate substrate. Residue Val279 coordinates FAD. A disulfide bond links Cys349 and Cys430. Asn379 carries N-linked (GlcNAc...) asparagine glycosylation. Tyr390 lines the substrate pocket. Residues Glu475 and 482-487 (GWIDST) contribute to the FAD site. Residue 482-483 (GW) participates in substrate binding.

It belongs to the flavin monoamine oxidase family. FIG1 subfamily. In terms of assembly, homodimer; non-covalently linked. Requires FAD as cofactor. In terms of processing, N-glycosylated. Expressed by the venom gland.

The protein localises to the secreted. It carries out the reaction an L-alpha-amino acid + O2 + H2O = a 2-oxocarboxylate + H2O2 + NH4(+). It catalyses the reaction L-leucine + O2 + H2O = 4-methyl-2-oxopentanoate + H2O2 + NH4(+). The catalysed reaction is L-phenylalanine + O2 + H2O = 3-phenylpyruvate + H2O2 + NH4(+). The enzyme catalyses L-methionine + O2 + H2O = 4-methylsulfanyl-2-oxobutanoate + H2O2 + NH4(+). It carries out the reaction L-arginine + O2 + H2O = 5-guanidino-2-oxopentanoate + H2O2 + NH4(+). Functionally, catalyzes an oxidative deamination of predominantly hydrophobic and aromatic L-amino acids, thus producing hydrogen peroxide that may contribute to the diverse toxic effects of this enzyme. Is active on L-Arg, L-Phe, L-Met, and L-Leu and is weakly active on L-Val. Exhibits diverse biological activities, such as hemorrhage, hemolysis, edema, apoptosis of vascular endothelial cells or tumor cell lines, antibacterial and antiparasitic activities, as well as regulation of platelet aggregation. Its effect on platelets is controversial, since it either induces aggregation or inhibits agonist-induced aggregation. These different effects are probably due to different experimental conditions. In Crotalus adamanteus (Eastern diamondback rattlesnake), this protein is L-amino-acid oxidase.